Consider the following 347-residue polypeptide: FK506-binding protein-like (347 aa).

The tract at residues 1–36 (METSLISPMKENNTAQPQQREENTQQNLNAAVPIKQ) is disordered. Position 3 is a phosphothreonine (T3). 3 TPR repeats span residues 208–241 (AKEE…LLTL), 250–283 (TILH…EPGH), and 284–317 (LKAL…DPKN).

Forms a ternary complex with CDKN1A/p21 and HSP90AB1/Hsp90.

Functionally, may be involved in response to X-ray. Regulates p21 protein stability by binding to Hsp90 and p21. The protein is FK506-binding protein-like (Fkbpl) of Rattus norvegicus (Rat).